The primary structure comprises 113 residues: Cytochrome c (113 aa).

Heme c is bound by residues Cys21, Cys24, His25, and Met90.

The protein belongs to the cytochrome c family. Post-translationally, binds 1 heme c group covalently per subunit.

The protein resides in the mitochondrion intermembrane space. Its function is as follows. Electron carrier protein. The oxidized form of the cytochrome c heme group can accept an electron from the heme group of the cytochrome c1 subunit of cytochrome reductase. Cytochrome c then transfers this electron to the cytochrome oxidase complex, the final protein carrier in the mitochondrial electron-transport chain. The sequence is that of Cytochrome c (cytC) from Dictyostelium discoideum (Social amoeba).